The chain runs to 227 residues: Phosphoglycolate phosphatase (227 aa).

Asp11 (nucleophile) is an active-site residue. Residues Asp11 and Asp13 each contribute to the Mg(2+) site. Lys155 lines the substrate pocket. Positions 178 and 182 each coordinate Mg(2+).

This sequence belongs to the archaeal SPP-like hydrolase family. It depends on Mg(2+) as a cofactor.

It carries out the reaction 2-phosphoglycolate + H2O = glycolate + phosphate. Functionally, catalyzes the dephosphorylation of 2-phosphoglycolate. This is Phosphoglycolate phosphatase from Haloarcula marismortui (strain ATCC 43049 / DSM 3752 / JCM 8966 / VKM B-1809) (Halobacterium marismortui).